Consider the following 601-residue polypeptide: UBA domain-containing protein 3 (601 aa).

The region spanning 7-129 (ETAIRELVQS…LFLDENHSTN (123 aa)) is the Arf-GAP domain. Disordered stretches follow at residues 123-158 (DENHSTNSKPPSLPPRTKSSSQSSPMASTSTSKSRY) and 289-310 (EPNQPLQPLRPSMTGPVPSSMG). Positions 139 to 156 (TKSSSQSSPMASTSTSKS) are enriched in low complexity. The region spanning 157-197 (RYADSLSTLHDMGFSDDSVNTHALEETNGDVTRAIEKIVQH) is the UBA domain.

The polypeptide is UBA domain-containing protein 3 (ucp3) (Schizosaccharomyces pombe (strain 972 / ATCC 24843) (Fission yeast)).